The following is a 255-amino-acid chain: 5'-nucleotidase SurE (255 aa).

Asp8, Asp9, Ser40, and Asn93 together coordinate a divalent metal cation.

This sequence belongs to the SurE nucleotidase family. It depends on a divalent metal cation as a cofactor.

Its subcellular location is the cytoplasm. The catalysed reaction is a ribonucleoside 5'-phosphate + H2O = a ribonucleoside + phosphate. Functionally, nucleotidase that shows phosphatase activity on nucleoside 5'-monophosphates. The sequence is that of 5'-nucleotidase SurE from Bradyrhizobium diazoefficiens (strain JCM 10833 / BCRC 13528 / IAM 13628 / NBRC 14792 / USDA 110).